A 221-amino-acid chain; its full sequence is Iron-sulfur cluster repair protein YtfE (221 aa).

This sequence belongs to the RIC family. YtfE subfamily. Homodimer.

The protein resides in the cytoplasm. In terms of biological role, di-iron-containing protein involved in the repair of iron-sulfur clusters damaged by oxidative and nitrosative stress conditions. The chain is Iron-sulfur cluster repair protein YtfE from Pectobacterium carotovorum subsp. carotovorum (strain PC1).